Reading from the N-terminus, the 977-residue chain is Serine/threonine-protein kinase N2 (977 aa).

3 REM-1 domains span residues 24–100 (NLDF…HIVV), 114–194 (DTPK…TSEI), and 200–280 (DVTT…ELPK). A C2 domain is found at 298-468 (PPNSPRQSIM…LYLEPQGTLF (171 aa)). 2 disordered regions span residues 342–381 (GRSKTASVSLPGWSPSEARSSFMSRGNKNKSGSSRTLSKS) and 531–576 (AADL…KRNS). Polar residues predominate over residues 358 to 378 (EARSSFMSRGNKNKSGSSRTL). A Protein kinase domain is found at 650 to 909 (FKCVAVLGRG…AEEVKRHPFF (260 aa)). ATP is bound by residues 656–664 (LGRGHFGKV) and Lys679. Residue Asp775 is the Proton acceptor of the active site. In terms of domain architecture, AGC-kinase C-terminal spans 910–977 (RDMDWPGLLA…ADFDYIADWC (68 aa)).

The protein belongs to the protein kinase superfamily. AGC Ser/Thr protein kinase family. PKC subfamily. Autophosphorylated. Phosphorylated. Post-translationally, proteolytically cleaved.

The protein resides in the cytoplasm. It is found in the nucleus. The protein localises to the membrane. It localises to the cell projection. Its subcellular location is the lamellipodium. The protein resides in the cytoskeleton. It is found in the cleavage furrow. The protein localises to the midbody. It localises to the cell junction. It carries out the reaction L-seryl-[protein] + ATP = O-phospho-L-seryl-[protein] + ADP + H(+). The catalysed reaction is L-threonyl-[protein] + ATP = O-phospho-L-threonyl-[protein] + ADP + H(+). Its activity is regulated as follows. Kinase activity is activated upon binding to GTP-bound Rho/Rac GTPases. Activated by lipids, particularly cardiolipin and to a lesser extent by other acidic phospholipids and unsaturated fatty acids. Two specific sites, Thr-809 (activation loop of the kinase domain) and Thr-951 (turn motif), may be needed to be phosphorylated for its full activation. Functionally, pkc-related serine/threonine-protein kinase and Rho/Rac effector protein that participates in specific signal transduction responses in the cell. May play a role in the regulation of cell cycle progression, actin cytoskeleton assembly, cell migration, cell adhesion and transcription activation signaling processes. The protein is Serine/threonine-protein kinase N2 (pkn2) of Danio rerio (Zebrafish).